The chain runs to 2179 residues: MGAQVSTQKSGSHENQNILTNGSNQTFTVINYYKDAASTSSAGQSLSMDPSKFTEPVKDLMLKGAPALNSPNVEACGYSDRVQQITLGNSTITTQEAANAVVCYAEWPEYLPDVDASDVNKTSKPDTSVCRFYTLDSKTWTTGSKGWCWKLPDALKDMGVFGQNMFFHSLGRSGYTVHVQCNATKFHSGCLLVVVIPEHQLASHEGGNVSVKYTFTHPGERGIDLSSANEVGGPVKDVIYNMNGTLLGNLLIFPHQFINLRTNNTATIVIPYINSVPIDSMTRHNNVSLMVIPIAPLTVPTGATPSLPITVTIAPMCTEFSGIRSKSIVPQGLPTTTLPGSGQFLTTDDRQSPSALPNYEPTPRIHIPGKVHNLLEIIQVDTLIPMNNTHTKDEVNSYLIPLNANRQNEQVFGTNLFIGDGVFKTTLLGEIVQYYTHWSGSLRFSLMYTGPALSSAKLILAYTPPGARGPQDRREAMLGTHVVWDIGLQSTIVMTIPWTSGVQFRYTDPDTYTSAGFLSCWYQTSLILPPETTGQVYLLSFISACPDFKLRLMKDTQTISQTVALTEGLGDELEEVIVEKTKQTVASISSGPKHTQKVPILTANETGATMPVLPSDSIETRTTYMHFNGSETDVECFLGRAACVHVTEIQNKDATGIDNHREAKLFNDWKINLSSLVQLRKKLELFTYVRFDSEYTILATASQPDSANYSSNLVVQAMYVPPGAPNPKEWDDYTWQSASNPSVFFKVGDTSRFSVPYVGLASAYNCFYDGYSHDDAETQYGITVLNHMGSMAFRIVNEHDEHKTLVKIRVYHRAKHVEAWIPRAPRALPYTSIGRTNYPKNTEPVIKKRKGDIKSYGLGPRYGGIYTSNVKIMNYHLMTPEDHHNLIAPYPNRDLAIVSTGGHGAETIPHCNCTSGVYYSTYYRKYYPIICEKPTNIWIEGNPYYPSRFQAGVMKGVGPAEPGDCGGILRCIHGPIGLLTAGGSGYVCFADIRQLECIAEEQGLSDYITGLGRAFGVGFTDQISTKVTELQEVAKDFLTTKVLSKVVKMVSALVIICRNHDDLVTVTATLALLGCDGSPWRFLKMYISKHFQVPYIERQANDGWFRKFNDACNAAKGLEWIANKISKLIEWIKNKVLPQAKEKLEFCSKLKQLDILERQITTMHISNPTQEKREQLFNNVLWLEQMSQKFAPLYAVESKRIRELKNKMVNYMQFKSKQRIEPVCVLIHGTPGSGKSLTTSIVGRAIAEHFNSAVYSLPPDPKHFDGYQQQEVVIMDDLNQNPDGQDISMFCQMVSSVDFLPPMASLDNKGMLFTSNFVLASTNSNTLSPPTILNPEALVRRFGFDLDICLHTTYTKNGKLNAGMSTKTCKDCHQPSNFKKCCPLVCGKAISLVDRTTNIRYSVDQLVTAIISDFKSKMQITDSLETLFQGPVYKDLEIDVCNTPPPECINDLLKSVDSEEIREYCKKKKWIIPEIPTNIERAMNQASMIINTILMFVSTLGIVYVIYKLFAQTQGPYSGNPPHNKLKAPTLRPVVVQGPNTEFALSLLRKNIMTITTSKGEFTGLGIHDRVCVIPTHAQPGDDVLVNGQKIRVKDKYKLVDPENINLELTVLTLDRNEKFRDIRGFISEDLEGVDATLVVHSNNFTNTILEVGPVTMAGLINLSSTPTNRMIRYDYATKTGQCGGVLCATGKIFGIHVGGNGRQGFSAQLKKQYFVEKQGQVIARHKVREFNINPVNTPTKSKLHPSVFYDVFPGDKEPAVLSDNDPRLEVKLTESLFSKYKGNVNTEPTENMLVAVDHYAGQLLSLDIPTSELTLKEALYGVDGLEPIDITTSAGFPYVSLGIKKRDILNKETQDTEKMKFYLDKYGIDLPLVTYIKDELRSVDKVRLGKSRLIEASSLNDSVNMRMKLGNLYKAFHQNPGVLTGSAVGCDPDVFWSVIPCLMDGHLMAFDYSNFDASLSPVWFVCLEKVLTKLGFAGSSLIQSICNTHHIFRDEIYVVEGGMPSGCSGTSIFNSMINNIIIRTLILDAYKGIDLDKLKILAYGDDLIVSYPYELDPQVLATLGKNYGLTITPPDKSETFTKMTWENLTFLKRYFKPDQQFPFLVHPVMPMKDIHESIRWTKDPKNTQDHVRSLCMLAWHSGEKEYNEFIQKIRTTDIGKCLILPEYSVLRRRWLDLF.

The disordered stretch occupies residues Met1–Thr20. The N-myristoyl glycine; by host moiety is linked to residue Gly2. At Gly2–Asn1491 the chain is on the cytoplasmic side. The tract at residues Ala564–Thr584 is amphipathic alpha-helix. Residues His876 and Asp894 each act as for protease 2A activity in the active site. The Zn(2+) site is built by Cys911 and Cys913. Cys965 functions as the For protease 2A activity in the catalytic mechanism. Positions 971 and 973 each coordinate Zn(2+). The membrane-binding stretch occupies residues Asn1101 to Arg1173. The oligomerization stretch occupies residues Asn1101 to Thr1239. The RNA-binding stretch occupies residues Ala1122–Ser1126. The SF3 helicase domain occupies Lys1205 to Asn1361. Zn(2+) contacts are provided by Cys1369, Cys1372, Cys1381, and Cys1386. The C4-type zinc-finger motif lies at Cys1369–Cys1386. Positions Asp1413–Ile1420 are RNA-binding. An oligomerization region spans residues Leu1424 to Gln1429. The stretch at Thr1492–Tyr1507 is an intramembrane region. Over Lys1508–Phe2179 the chain is Cytoplasmic. Tyr1517 is modified (O-(5'-phospho-RNA)-tyrosine). The Peptidase C3 domain occupies Gly1538–Phe1715. Catalysis depends on for protease 3C activity residues His1577, Glu1608, and Cys1683. Residues Gly1946–Val2060 form the RdRp catalytic domain. The Mg(2+) site is built by Asp1952 and Asp2046.

Belongs to the picornaviruses polyprotein family. Interacts with capsid protein VP1 and capsid protein VP3 to form heterotrimeric protomers. In terms of assembly, interacts with capsid protein VP0, and capsid protein VP3 to form heterotrimeric protomers. Five protomers subsequently associate to form pentamers which serve as building blocks for the capsid. Interacts with capsid protein VP2, capsid protein VP3 and capsid protein VP4 following cleavage of capsid protein VP0. Interacts with host ICAM1. As to quaternary structure, interacts with capsid protein VP1 and capsid protein VP3 in the mature capsid. Interacts with capsid protein VP0 and capsid protein VP1 to form heterotrimeric protomers. Five protomers subsequently associate to form pentamers which serve as building blocks for the capsid. Interacts with capsid protein VP4 in the mature capsid. Interacts with protein 2C; this interaction may be important for virion morphogenesis. In terms of assembly, interacts with capsid protein VP1 and capsid protein VP3. As to quaternary structure, homodimer. Homohexamer; forms a hexameric ring structure with 6-fold symmetry characteristic of AAA+ ATPases. Interacts (via N-terminus) with host RTN3 (via reticulon domain); this interaction is important for viral replication. Interacts with capsid protein VP3; this interaction may be important for virion morphogenesis. In terms of assembly, interacts with protein 3CD. As to quaternary structure, homodimer. Interacts with host GBF1. Interacts (via GOLD domain) with host ACBD3 (via GOLD domain); this interaction allows the formation of a viral protein 3A/ACBD3 heterotetramer with a 2:2 stoichiometry, which will stimulate the recruitment of host PI4KB in order to synthesize PI4P at the viral RNA replication sites. Interacts with RNA-directed RNA polymerase. In terms of assembly, interacts with protein 3AB and with RNA-directed RNA polymerase. As to quaternary structure, interacts with Viral protein genome-linked and with protein 3CD. The cofactor is Mg(2+). Specific enzymatic cleavages in vivo by the viral proteases yield processing intermediates and the mature proteins. Post-translationally, myristoylation is required for the formation of pentamers during virus assembly. Further assembly of 12 pentamers and a molecule of genomic RNA generates the provirion. In terms of processing, during virion maturation, immature virions are rendered infectious following cleavage of VP0 into VP4 and VP2. This maturation seems to be an autocatalytic event triggered by the presence of RNA in the capsid and it is followed by a conformational change infectious virion. Myristoylation is required during RNA encapsidation and formation of the mature virus particle. Post-translationally, VPg is uridylylated by the polymerase into VPg-pUpU. This acts as a nucleotide-peptide primer for the genomic RNA replication.

The protein resides in the virion. The protein localises to the host cytoplasm. It is found in the host cytoplasmic vesicle membrane. Its subcellular location is the host nucleus. It catalyses the reaction a ribonucleoside 5'-triphosphate + H2O = a ribonucleoside 5'-diphosphate + phosphate + H(+). The catalysed reaction is Selective cleavage of Tyr-|-Gly bond in the picornavirus polyprotein.. It carries out the reaction RNA(n) + a ribonucleoside 5'-triphosphate = RNA(n+1) + diphosphate. The enzyme catalyses Selective cleavage of Gln-|-Gly bond in the poliovirus polyprotein. In other picornavirus reactions Glu may be substituted for Gln, and Ser or Thr for Gly.. Its activity is regulated as follows. Replication or transcription is subject to high level of random mutations by the nucleotide analog ribavirin. Forms an icosahedral capsid of pseudo T=3 symmetry with capsid proteins VP2 and VP3. The capsid is 300 Angstroms in diameter, composed of 60 copies of each capsid protein and enclosing the viral positive strand RNA genome. Capsid protein VP1 mainly forms the vertices of the capsid. Capsid protein VP1 interacts with host ICAM1 to provide virion attachment to target host cells. This attachment induces virion internalization. Tyrosine kinases are probably involved in the entry process. After binding to its receptor, the capsid undergoes conformational changes. Capsid protein VP1 N-terminus (that contains an amphipathic alpha-helix) and capsid protein VP4 are externalized. Together, they shape a pore in the host membrane through which viral genome is translocated to host cell cytoplasm. After genome has been released, the channel shrinks. In terms of biological role, forms an icosahedral capsid of pseudo T=3 symmetry with capsid proteins VP2 and VP3. The capsid is 300 Angstroms in diameter, composed of 60 copies of each capsid protein and enclosing the viral positive strand RNA genome. Functionally, lies on the inner surface of the capsid shell. After binding to the host receptor, the capsid undergoes conformational changes. Capsid protein VP4 is released, Capsid protein VP1 N-terminus is externalized, and together, they shape a pore in the host membrane through which the viral genome is translocated into the host cell cytoplasm. Its function is as follows. Component of immature procapsids, which is cleaved into capsid proteins VP4 and VP2 after maturation. Allows the capsid to remain inactive before the maturation step. Cysteine protease that cleaves viral polyprotein and specific host proteins. It is responsible for the autocatalytic cleavage between the P1 and P2 regions, which is the first cleavage occurring in the polyprotein. Also cleaves the host translation initiation factor EIF4G1, in order to shut down the capped cellular mRNA translation. Inhibits the host nucleus-cytoplasm protein and RNA trafficking by cleaving host members of the nuclear pores including NUP62 and NUP153. Counteracts stress granule formation probably by antagonizing its assembly or promoting its dissassembly. In terms of biological role, plays an essential role in the virus replication cycle by acting as a viroporin. Creates a pore in the host endoplasmic reticulum and as a consequence releases Ca2+ in the cytoplasm of infected cell. In turn, high levels of cytoplasmic calcium may trigger membrane trafficking and transport of viral ER-associated proteins to viroplasms, sites of viral genome replication. Functionally, induces and associates with structural rearrangements of intracellular membranes. Displays RNA-binding, nucleotide binding and NTPase activities. May play a role in virion morphogenesis and viral RNA encapsidation by interacting with the capsid protein VP3. Its function is as follows. Localizes the viral replication complex to the surface of membranous vesicles. Together with protein 3CD binds the Cis-Active RNA Element (CRE) which is involved in RNA synthesis initiation. Acts as a cofactor to stimulate the activity of 3D polymerase, maybe through a nucleid acid chaperone activity. Localizes the viral replication complex to the surface of membranous vesicles. It inhibits host cell endoplasmic reticulum-to-Golgi apparatus transport and causes the disassembly of the Golgi complex, possibly through GBF1 interaction. This would result in depletion of MHC, trail receptors and IFN receptors at the host cell surface. Plays an essential role in viral RNA replication by recruiting ACBD3 and PI4KB at the viral replication sites, thereby allowing the formation of the rearranged membranous structures where viral replication takes place. In terms of biological role, acts as a primer for viral RNA replication and remains covalently bound to viral genomic RNA. VPg is uridylylated prior to priming replication into VPg-pUpU. The oriI viral genomic sequence may act as a template for this. The VPg-pUpU is then used as primer on the genomic RNA poly(A) by the RNA-dependent RNA polymerase to replicate the viral genome. During genome replication, the VPg-RNA linkage is removed by the host TDP2, thereby accelerating replication. During the late stage of the replication cycle, host TDP2 is excluded from sites of viral RNA synthesis and encapsidation, allowing for the generation of progeny virions. Functionally, involved in the viral replication complex and viral polypeptide maturation. It exhibits protease activity with a specificity and catalytic efficiency that is different from protease 3C. Protein 3CD lacks polymerase activity. Protein 3CD binds to the 5'UTR of the viral genome. Its function is as follows. Major viral protease that mediates proteolytic processing of the polyprotein. Cleaves host EIF5B, contributing to host translation shutoff. Cleaves also host PABPC1, contributing to host translation shutoff. Cleaves host NLRP1, triggers host N-glycine-mediated degradation of the autoinhibitory NLRP1 N-terminal fragment. Replicates the viral genomic RNA on the surface of intracellular membranes. May form linear arrays of subunits that propagate along a strong head-to-tail interaction called interface-I. Covalently attaches UMP to a tyrosine of VPg, which is used to prime RNA synthesis. The positive stranded RNA genome is first replicated at virus induced membranous vesicles, creating a dsRNA genomic replication form. This dsRNA is then used as template to synthesize positive stranded RNA genomes. ss(+)RNA genomes are either translated, replicated or encapsidated. The chain is Genome polyprotein from Homo sapiens (Human).